The chain runs to 265 residues: Small ribosomal subunit protein uS2 (265 aa).

This sequence belongs to the universal ribosomal protein uS2 family.

The sequence is that of Small ribosomal subunit protein uS2 from Ligilactobacillus salivarius (strain UCC118) (Lactobacillus salivarius).